Consider the following 213-residue polypeptide: Translation initiation factor IF-3 (213 aa).

Residues 193–213 are disordered; the sequence is EKIASLPPLPPDNSGEPEDDE.

Belongs to the IF-3 family. Monomer.

It is found in the cytoplasm. Functionally, IF-3 binds to the 30S ribosomal subunit and shifts the equilibrium between 70S ribosomes and their 50S and 30S subunits in favor of the free subunits, thus enhancing the availability of 30S subunits on which protein synthesis initiation begins. The sequence is that of Translation initiation factor IF-3 from Chlorobaculum tepidum (strain ATCC 49652 / DSM 12025 / NBRC 103806 / TLS) (Chlorobium tepidum).